A 348-amino-acid polypeptide reads, in one-letter code: Aspartate carbamoyltransferase catalytic subunit (348 aa).

Residues Arg59 and Thr60 each coordinate carbamoyl phosphate. L-aspartate is bound at residue Lys87. Arg109, His142, and Gln145 together coordinate carbamoyl phosphate. Arg182 and Arg253 together coordinate L-aspartate. Carbamoyl phosphate contacts are provided by Gly294 and Pro295.

It belongs to the aspartate/ornithine carbamoyltransferase superfamily. ATCase family. As to quaternary structure, heterododecamer (2C3:3R2) of six catalytic PyrB chains organized as two trimers (C3), and six regulatory PyrI chains organized as three dimers (R2).

The enzyme catalyses carbamoyl phosphate + L-aspartate = N-carbamoyl-L-aspartate + phosphate + H(+). The protein operates within pyrimidine metabolism; UMP biosynthesis via de novo pathway; (S)-dihydroorotate from bicarbonate: step 2/3. Functionally, catalyzes the condensation of carbamoyl phosphate and aspartate to form carbamoyl aspartate and inorganic phosphate, the committed step in the de novo pyrimidine nucleotide biosynthesis pathway. This is Aspartate carbamoyltransferase catalytic subunit from Prochlorococcus marinus (strain MIT 9313).